An 889-amino-acid polypeptide reads, in one-letter code: Voltage-gated potassium channel KCNC3 (889 aa).

Residues 1–80 (MLSSVCVWSF…CSGLPAVAMG (80 aa)) are important for normal N-type inactivation. At 1-291 (MLSSVCVWSF…EDPYSSRAAR (291 aa)) the chain is on the cytoplasmic side. Residues 10–66 (FSGRQGTRKQHSQPAPTPQPPESSPPPLLPPPQQQCAQPGTAASPAGAPLSCGPGGR) are disordered. Residues 24–42 (APTPQPPESSPPPLLPPPQ) are compositionally biased toward pro residues. Positions 159, 165, 186, and 187 each coordinate Zn(2+). Residues 202 to 231 (DSFEAPDSSGNANANAGGAHDAGLDDEAGA) form a disordered region. The segment covering 211 to 222 (GNANANAGGAHD) has biased composition (low complexity). The chain crosses the membrane as a helical span at residues 292 to 310 (YVAFASLFFILISITTFCL). N321 is a glycosylation site (N-linked (GlcNAc...) asparagine). Residues 352-371 (VEGVCVVWFTFEFLMRVTFC) traverse the membrane as a helical segment. Topologically, residues 372-380 (PDKVEFLKS) are cytoplasmic. A helical transmembrane segment spans residues 381 to 399 (SLNIIDCVAILPFYLEVGL). The chain crosses the membrane as a helical; Voltage-sensor span at residues 413–435 (FLRVVRFVRILRIFKLTRHFVGL). The Cytoplasmic segment spans residues 436–448 (RVLGHTLRASTNE). The chain crosses the membrane as a helical span at residues 449 to 470 (FLLLIIFLALGVLIFATMIYYA). K(+) contacts are provided by T504, L505, G506, and Y507. The Selectivity filter motif lies at 504–509 (TLGYGD). A helical transmembrane segment spans residues 519 to 540 (LVGALCALAGVLTIAMPVPVIV). The Cytoplasmic segment spans residues 541–889 (NNFGMYYSLA…FPSRHSSPAV (349 aa)). 3 disordered regions span residues 557 to 627 (PKKK…LLRG), 691 to 834 (IDQP…PQSL), and 852 to 889 (TLGF…SPAV). R626 bears the Omega-N-methylarginine mark. Phosphoserine occurs at positions 697 and 702. The span at 748-764 (SQAPPASCPTSTPTQQP) shows a compositional bias: low complexity. At T759 the chain carries Phosphothreonine. The segment covering 794–808 (HRSHQPPGKHQRGGR) has biased composition (basic residues).

The protein belongs to the potassium channel family. C (Shaw) (TC 1.A.1.2) subfamily. Kv3.3/KCNC3 sub-subfamily. In terms of assembly, homotetramer. Heterotetramer with KCNC1. Interacts (via C-terminus) with HAX1; this interaction modulates channel gating. Identified in a complex with ACTR3, a subunit of the Arp2/3 complex; this interaction is indirect and depends on the presence of HAX1. N-glycosylated. As to expression, detected on Purkinje cells in the cerebellum molecular layer (at protein level).

It localises to the cell membrane. The protein resides in the presynaptic cell membrane. It is found in the perikaryon. Its subcellular location is the cell projection. The protein localises to the axon. It localises to the dendrite. The protein resides in the dendritic spine membrane. It is found in the cytoplasm. Its subcellular location is the cell cortex. The protein localises to the cytoskeleton. The catalysed reaction is K(+)(in) = K(+)(out). Its function is as follows. Voltage-gated potassium channel that plays an important role in the rapid repolarization of fast-firing brain neurons. The channel opens in response to the voltage difference across the membrane, forming a potassium-selective channel through which potassium ions pass in accordance with their electrochemical gradient. The channel displays rapid activation and inactivation kinetics. It plays a role in the regulation of the frequency, shape and duration of action potentials in Purkinje cells. Required for normal survival of cerebellar neurons, probably via its role in regulating the duration and frequency of action potentials that in turn regulate the activity of voltage-gated Ca(2+) channels and cellular Ca(2+) homeostasis. Required for normal motor function. Plays a role in the reorganization of the cortical actin cytoskeleton and the formation of actin veil structures in neuronal growth cones via its interaction with HAX1 and the Arp2/3 complex. The polypeptide is Voltage-gated potassium channel KCNC3 (Rattus norvegicus (Rat)).